The following is a 103-amino-acid chain: Small ribosomal subunit protein bS6c (103 aa).

The protein belongs to the bacterial ribosomal protein bS6 family.

The protein resides in the plastid. It localises to the chloroplast. In terms of biological role, binds together with bS18 to 16S ribosomal RNA. This chain is Small ribosomal subunit protein bS6c (rps6), found in Cyanidium caldarium (Red alga).